A 111-amino-acid polypeptide reads, in one-letter code: GDAAKGANVAKSCGTCHSFEQGGAKKQGPNLFGITTRGPGKAEGFNYSPSYKAAAAKGFAWDAATLQDYITDPTAFLSNKTGDAAARDKMTFKLAKPDERADVIAYLATLK.

4 residues coordinate heme c: C13, C16, H17, and M90.

Binds 1 heme c group covalently per subunit.

This chain is Cytochrome c-550, found in Novispirillum itersonii (Aquaspirillum itersonii).